The chain runs to 208 residues: Small ribosomal subunit protein uS4 (208 aa).

The 63-residue stretch at 98-160 (RRLDNVVYRM…SKNNVQIQRA (63 aa)) folds into the S4 RNA-binding domain.

The protein belongs to the universal ribosomal protein uS4 family. Part of the 30S ribosomal subunit. Contacts protein S5. The interaction surface between S4 and S5 is involved in control of translational fidelity.

Functionally, one of the primary rRNA binding proteins, it binds directly to 16S rRNA where it nucleates assembly of the body of the 30S subunit. Its function is as follows. With S5 and S12 plays an important role in translational accuracy. The chain is Small ribosomal subunit protein uS4 from Nautilia profundicola (strain ATCC BAA-1463 / DSM 18972 / AmH).